Consider the following 244-residue polypeptide: Inner kinetochore subunit fta7 (244 aa).

This sequence belongs to the CENP-Q/OKP1 family. In terms of assembly, component of the heterotetrameric kinetochore subcomplex COMA, which consists of fta2, fta7, mal2 and mis17. The COMA subcomplex is part of a larger constitutive centromere-associated network (CCAN) (also known as central kinetochore Sim4 complex in fission yeast), which is composed of at least cnl2, cnp3, cnp20, fta1, fta2, fta3, fta4, fta6, fta7, mal2, mhf1, mhf2, mis6, mis15, mis17, sim4 and wip1.

It localises to the nucleus. The protein resides in the chromosome. It is found in the centromere. Its subcellular location is the kinetochore. The protein localises to the cytoplasm. It localises to the cytoskeleton. The protein resides in the microtubule organizing center. It is found in the spindle pole body. Functionally, component of the kinetochore, a multiprotein complex that assembles on centromeric DNA and attaches chromosomes to spindle microtubules, mediating chromosome segregation and sister chromatid segregation during meiosis and mitosis. Component of the inner kinetochore COMA complex, which connects centromere-associated proteins and the outer kinetochore. COMA interacts with other inner kinetochore proteins to form the inner kinetochore constitutive centromere-associated network (CCAN), which serves as a structural platform for outer kinetochore assembly. In Schizosaccharomyces pombe (strain 972 / ATCC 24843) (Fission yeast), this protein is Inner kinetochore subunit fta7 (fta7).